Consider the following 507-residue polypeptide: ATP synthase subunit alpha, chloroplastic (507 aa).

An ATP-binding site is contributed by 170–177 (GDRQTGKT). At Thr-257 the chain carries Phosphothreonine.

This sequence belongs to the ATPase alpha/beta chains family. In terms of assembly, F-type ATPases have 2 components, CF(1) - the catalytic core - and CF(0) - the membrane proton channel. CF(1) has five subunits: alpha(3), beta(3), gamma(1), delta(1), epsilon(1). CF(0) has four main subunits: a, b, b' and c.

It is found in the plastid. The protein localises to the chloroplast thylakoid membrane. It carries out the reaction ATP + H2O + 4 H(+)(in) = ADP + phosphate + 5 H(+)(out). Produces ATP from ADP in the presence of a proton gradient across the membrane. The alpha chain is a regulatory subunit. The polypeptide is ATP synthase subunit alpha, chloroplastic (Capsella bursa-pastoris (Shepherd's purse)).